We begin with the raw amino-acid sequence, 76 residues long: MDILLELAGYTGIASGTAKKVVDAIDKGAAAFVIISIISTVISAGALGAVSASADFIILTVKNYISRNLKAQAVIW.

Positions 1–6 (MDILLE) are excised as a propeptide. The cyclopeptide (Leu-Trp) cross-link spans 7–76 (LAGYTGIASG…RNLKAQAVIW (70 aa)).

Belongs to the bacteriocin class V family.

The protein localises to the secreted. Cyclopeptide antibiotic with bacteriolytic activity against most streptococci (except S.rattus and S.mutans), Listeria spp., enterococci and staphylococci. This chain is Bacteriocin uberolysin (ublA), found in Streptococcus uberis.